Consider the following 417-residue polypeptide: Ribonucleoside-diphosphate reductase small chain (417 aa).

Positions 168, 199, and 202 each coordinate Fe cation. Residue Y206 is part of the active site. Fe cation is bound by residues E261, E297, and H300.

The protein belongs to the ribonucleoside diphosphate reductase small chain family. In terms of assembly, heterotetramer composed of a homodimer of the large subunit (R1) and a homodimer of the small subunit (R2). Larger multisubunit protein complex are also active, composed of (R1)n(R2)n. Fe cation is required as a cofactor.

The catalysed reaction is a 2'-deoxyribonucleoside 5'-diphosphate + [thioredoxin]-disulfide + H2O = a ribonucleoside 5'-diphosphate + [thioredoxin]-dithiol. Functionally, ribonucleoside-diphosphate reductase holoenzyme provides the precursors necessary for viral DNA synthesis. Allows virus growth in non-dividing cells. Catalyzes the biosynthesis of deoxyribonucleotides from the corresponding ribonucleotides. This Acanthamoeba polyphaga mimivirus (APMV) protein is Ribonucleoside-diphosphate reductase small chain (RNR2).